A 326-amino-acid polypeptide reads, in one-letter code: Regulation of nuclear pre-mRNA domain-containing protein 1B (326 aa).

The residue at position 2 (Ser-2) is an N-acetylserine. A CID domain is found at 2 to 133 (SSFSESALEK…QLKLSMEDSK (132 aa)). Residues 127–149 (LSMEDSKSPPPKATEEKKSLKRT) form a disordered region. The segment covering 128–144 (SMEDSKSPPPKATEEKK) has biased composition (basic and acidic residues). Residues Ser-132 and Ser-134 each carry the phosphoserine modification. The residue at position 161 (Tyr-161) is a Phosphotyrosine. 2 positions are modified to phosphoserine: Ser-166 and Ser-299.

This sequence belongs to the UPF0400 (RTT103) family. Homodimer. May form a heterodimer with RPRD1A. Associates with RPAP2. Associates with the RNA polymerase II complex. As to expression, preferentially expressed in a range of tumor tissues including colon, lung, liver, breast, prostate, stomach, uterine endometrium and cervical cancers with higher levels in tumors than in adjacent non-tumor tissue (at protein level).

The protein resides in the nucleus. In terms of biological role, interacts with phosphorylated C-terminal heptapeptide repeat domain (CTD) of the largest RNA polymerase II subunit POLR2A, and participates in dephosphorylation of the CTD by RPAP2. Transcriptional regulator which enhances expression of CCND1. Promotes binding of RNA polymerase II to the CCDN1 promoter and to the termination region before the poly-A site but decreases its binding after the poly-A site. Prevents RNA polymerase II from reading through the 3' end termination site and may allow it to be recruited back to the promoter through promotion of the formation of a chromatin loop. Also enhances the transcription of a number of other cell cycle-related genes including CDK2, CDK4, CDK6 and cyclin-E but not CDKN1A, CDKN1B or cyclin-A. Promotes cell proliferation. The polypeptide is Regulation of nuclear pre-mRNA domain-containing protein 1B (RPRD1B) (Homo sapiens (Human)).